The primary structure comprises 239 residues: Ribonuclease PH (239 aa).

Residues Arg87 and 125–127 (GTR) contribute to the phosphate site.

The protein belongs to the RNase PH family. Homohexameric ring arranged as a trimer of dimers.

The enzyme catalyses tRNA(n+1) + phosphate = tRNA(n) + a ribonucleoside 5'-diphosphate. Phosphorolytic 3'-5' exoribonuclease that plays an important role in tRNA 3'-end maturation. Removes nucleotide residues following the 3'-CCA terminus of tRNAs; can also add nucleotides to the ends of RNA molecules by using nucleoside diphosphates as substrates, but this may not be physiologically important. Probably plays a role in initiation of 16S rRNA degradation (leading to ribosome degradation) during starvation. This Cyanothece sp. (strain PCC 7425 / ATCC 29141) protein is Ribonuclease PH.